The chain runs to 363 residues: Peptide chain release factor 2 (363 aa).

At Q251 the chain carries N5-methylglutamine.

It belongs to the prokaryotic/mitochondrial release factor family. In terms of processing, methylated by PrmC. Methylation increases the termination efficiency of RF2.

It is found in the cytoplasm. Its function is as follows. Peptide chain release factor 2 directs the termination of translation in response to the peptide chain termination codons UGA and UAA. The protein is Peptide chain release factor 2 of Helicobacter acinonychis (strain Sheeba).